The chain runs to 232 residues: Glutathione-specific gamma-glutamylcyclotransferase (232 aa).

10-15 (VLGYGS) provides a ligand contact to substrate. Catalysis depends on E115, which acts as the Proton acceptor.

The protein belongs to the gamma-glutamylcyclotransferase family. ChaC subfamily.

It localises to the cytoplasm. The protein localises to the nucleus. It catalyses the reaction glutathione = L-cysteinylglycine + 5-oxo-L-proline. In terms of biological role, catalyzes the cleavage of glutathione into 5-oxo-L-proline and a Cys-Gly dipeptide. Acts specifically on glutathione, but not on other gamma-glutamyl peptides. Allows utilization of gluthathione through subsequent cleavage of the Cys-Gly dipeptide by Cys-Gly metallodipeptidase DUG1. This is Glutathione-specific gamma-glutamylcyclotransferase from Saccharomyces cerevisiae (strain ATCC 204508 / S288c) (Baker's yeast).